The sequence spans 692 residues: Elongation factor G (692 aa).

The tr-type G domain occupies 8-282 (EKTRNIGIMA…AVIDYLPSPL (275 aa)). Residues 17-24 (AHVDAGKT), 81-85 (DTPGH), and 135-138 (NKMD) contribute to the GTP site.

Belongs to the TRAFAC class translation factor GTPase superfamily. Classic translation factor GTPase family. EF-G/EF-2 subfamily.

It localises to the cytoplasm. Its function is as follows. Catalyzes the GTP-dependent ribosomal translocation step during translation elongation. During this step, the ribosome changes from the pre-translocational (PRE) to the post-translocational (POST) state as the newly formed A-site-bound peptidyl-tRNA and P-site-bound deacylated tRNA move to the P and E sites, respectively. Catalyzes the coordinated movement of the two tRNA molecules, the mRNA and conformational changes in the ribosome. The chain is Elongation factor G from Streptococcus agalactiae serotype III (strain NEM316).